Consider the following 440-residue polypeptide: Phosphoglycerate kinase, glycosomal (440 aa).

Valine 23, aspartate 24, phenylalanine 25, asparagine 26, arginine 39, serine 61, histidine 62, glycine 64, arginine 65, arginine 135, histidine 171, and arginine 172 together coordinate (2R)-3-phosphoglycerate. Glycine 217 is a CDP binding site. Alanine 218 is a binding site for ADP. Residues alanine 218 and lysine 219 each contribute to the AMP site. ATP is bound at residue alanine 218. Alanine 218 provides a ligand contact to Mg(2+). Lysine 219 serves as a coordination point for (2R)-3-phosphoglycerate. Aspartate 222 lines the CDP pocket. Aspartate 222 contributes to the Mg(2+) binding site. Lysine 223 and glycine 241 together coordinate ADP. Lysine 223 provides a ligand contact to AMP. CDP is bound at residue glycine 241. AMP contacts are provided by alanine 242 and alanine 314. Positions 242 and 314 each coordinate ATP. Residues alanine 314 and asparagine 338 each coordinate ADP. CDP contacts are provided by glycine 339 and phenylalanine 344. Residues phenylalanine 344, glutamate 345, aspartate 377, and serine 378 each coordinate ADP. Glutamate 345 contacts AMP. The ATP site is built by aspartate 377 and serine 378. Mg(2+) is bound at residue aspartate 377.

It belongs to the phosphoglycerate kinase family. Monomer. Mg(2+) serves as cofactor.

It localises to the glycosome. It catalyses the reaction (2R)-3-phosphoglycerate + ATP = (2R)-3-phospho-glyceroyl phosphate + ADP. The protein operates within carbohydrate degradation; glycolysis; pyruvate from D-glyceraldehyde 3-phosphate: step 2/5. This is Phosphoglycerate kinase, glycosomal from Trypanosoma brucei brucei.